The following is a 104-amino-acid chain: Small ribosomal subunit protein uS10 (104 aa).

The protein belongs to the universal ribosomal protein uS10 family. Part of the 30S ribosomal subunit.

Involved in the binding of tRNA to the ribosomes. The sequence is that of Small ribosomal subunit protein uS10 from Maricaulis maris (strain MCS10) (Caulobacter maris).